The sequence spans 181 residues: Oligoribonuclease (181 aa).

Residues 8 to 171 (LIWIDMEMTG…ADIYDSIEEL (164 aa)) enclose the Exonuclease domain. Tyrosine 129 is an active-site residue.

This sequence belongs to the oligoribonuclease family.

Its subcellular location is the cytoplasm. 3'-to-5' exoribonuclease specific for small oligoribonucleotides. This chain is Oligoribonuclease, found in Nitrosomonas europaea (strain ATCC 19718 / CIP 103999 / KCTC 2705 / NBRC 14298).